Consider the following 471-residue polypeptide: Bifunctional protein GlmU (471 aa).

Residues 1–235 (MVAVAILAAG…YQEIFGINNR (235 aa)) are pyrophosphorylase. UDP-N-acetyl-alpha-D-glucosamine-binding positions include 7 to 10 (LAAG), Lys21, Gln82, and 87 to 88 (GT). A Mg(2+)-binding site is contributed by Asp112. The UDP-N-acetyl-alpha-D-glucosamine site is built by Gly149, Glu164, Asn179, and Asn233. Asn233 contributes to the Mg(2+) binding site. Residues 236–256 (KHLAKAHEILQVRVKDDWMEA) are linker. Residues 257–471 (GVTLIDPDSI…SKKEENKSSP (215 aa)) are N-acetyltransferase. Arg338 and Lys356 together coordinate UDP-N-acetyl-alpha-D-glucosamine. His368 functions as the Proton acceptor in the catalytic mechanism. UDP-N-acetyl-alpha-D-glucosamine contacts are provided by Tyr371 and Asn382. Residues Ala385, 391-392 (NY), Ser410, Ala428, and Arg445 each bind acetyl-CoA.

The protein in the N-terminal section; belongs to the N-acetylglucosamine-1-phosphate uridyltransferase family. It in the C-terminal section; belongs to the transferase hexapeptide repeat family. As to quaternary structure, homotrimer. Mg(2+) serves as cofactor.

It is found in the cytoplasm. The catalysed reaction is alpha-D-glucosamine 1-phosphate + acetyl-CoA = N-acetyl-alpha-D-glucosamine 1-phosphate + CoA + H(+). It carries out the reaction N-acetyl-alpha-D-glucosamine 1-phosphate + UTP + H(+) = UDP-N-acetyl-alpha-D-glucosamine + diphosphate. The protein operates within nucleotide-sugar biosynthesis; UDP-N-acetyl-alpha-D-glucosamine biosynthesis; N-acetyl-alpha-D-glucosamine 1-phosphate from alpha-D-glucosamine 6-phosphate (route II): step 2/2. It functions in the pathway nucleotide-sugar biosynthesis; UDP-N-acetyl-alpha-D-glucosamine biosynthesis; UDP-N-acetyl-alpha-D-glucosamine from N-acetyl-alpha-D-glucosamine 1-phosphate: step 1/1. It participates in bacterial outer membrane biogenesis; LPS lipid A biosynthesis. Catalyzes the last two sequential reactions in the de novo biosynthetic pathway for UDP-N-acetylglucosamine (UDP-GlcNAc). The C-terminal domain catalyzes the transfer of acetyl group from acetyl coenzyme A to glucosamine-1-phosphate (GlcN-1-P) to produce N-acetylglucosamine-1-phosphate (GlcNAc-1-P), which is converted into UDP-GlcNAc by the transfer of uridine 5-monophosphate (from uridine 5-triphosphate), a reaction catalyzed by the N-terminal domain. This Trichodesmium erythraeum (strain IMS101) protein is Bifunctional protein GlmU.